Reading from the N-terminus, the 179-residue chain is Large ribosomal subunit protein uL5 (179 aa).

It belongs to the universal ribosomal protein uL5 family. Part of the 50S ribosomal subunit; part of the 5S rRNA/L5/L18/L25 subcomplex. Contacts the 5S rRNA and the P site tRNA. Forms a bridge to the 30S subunit in the 70S ribosome.

This is one of the proteins that bind and probably mediate the attachment of the 5S RNA into the large ribosomal subunit, where it forms part of the central protuberance. In the 70S ribosome it contacts protein S13 of the 30S subunit (bridge B1b), connecting the 2 subunits; this bridge is implicated in subunit movement. Contacts the P site tRNA; the 5S rRNA and some of its associated proteins might help stabilize positioning of ribosome-bound tRNAs. The polypeptide is Large ribosomal subunit protein uL5 (Dichelobacter nodosus (strain VCS1703A)).